Here is a 757-residue protein sequence, read N- to C-terminus: MASHVVGYPRMGPKRELKFALESFWDGKSSAEDLKKVAADLRSSIWKQMADAGIKYIPSNTFAYYDQVLDTTAMLGAVPARYGFNGGEIGFDLYFSMARGNASLPAMEMTKWFDTNYHYIVPELGPEVKFAYSSHKAVDEYKEAKALGVDTVPVLVGPVSYLLLSKAAKGVEKSFPLLSLLPKILPVYKEVIAELKAAGASTIQFDEPTLVMDLESHQLKAFTDAYADLESTLSGLNVLVETYFADLTPEAYKTLVSLNGVTAFGFDLVRGTKTLDLIKSGFPSGKYLFAGVVDGRNIWANDLAASLATLQSLESIVGKDKLVVSTSCSLLHTAVDLVNETKLDDEIKSWLAFAAQKVLEVNALAKALAGQKDEAFFSANAAALASRKSSPRVTNEAVQKAAAGLKGSDHRRATTVSARLDAQQKKLNLPVLPTTTIGSFPQTVELRRVRREYKAKKISEEEYVKAIKEEISKVVKLQEELDIDVLVHGEPERNDMVEYFGEQLSGFAFTVNGWVQSYGSRCVKPPIIYGDVSRPKAMTVFWSSLAQSMTSRPMKGMLTGPVTILNWSFVRNDQPRHETCYQIALAIEDEAEDLEKAGINVIQIDEAALREGLPLRKSGHGFYLQWAVHSFRITNVGIQDTTQIHTHMCYSNFNDIIHSIIDMDADVITIENSRSDEKLLSVFREGVKYGAGIGPGVYDIHSPRIPPTEELADRIRKMLAVLESNVLWVNPDCGLKTRKYNEVNPALSNMVYAAKPI.

Residues Lys-18 and Asn-116 each contribute to the 5-methyltetrahydropteroyltri-L-glutamate site. Residue 437–439 (IGS) coordinates L-homocysteine. L-methionine is bound by residues 437–439 (IGS) and Glu-490. 5-methyltetrahydropteroyltri-L-glutamate is bound by residues 521 to 522 (RC) and Trp-567. Residue Asp-605 participates in L-homocysteine binding. Asp-605 contributes to the L-methionine binding site. Zn(2+)-binding residues include His-647, Cys-649, His-658, Asp-662, and Glu-671. The active-site Proton donor is the His-701. Zn(2+) is bound at residue Cys-733.

The protein belongs to the vitamin-B12 independent methionine synthase family. Zn(2+) is required as a cofactor. As to expression, expressed in pollen (at protein level).

The enzyme catalyses 5-methyltetrahydropteroyltri-L-glutamate + L-homocysteine = tetrahydropteroyltri-L-glutamate + L-methionine. Its pathway is amino-acid biosynthesis; L-methionine biosynthesis via de novo pathway; L-methionine from L-homocysteine (MetE route): step 1/1. In terms of biological role, catalyzes the transfer of a methyl group from 5-methyltetrahydrofolate to homocysteine resulting in methionine formation. This Kali turgidum (Prickly saltwort) protein is 5-methyltetrahydropteroyltriglutamate--homocysteine methyltransferase.